A 353-amino-acid polypeptide reads, in one-letter code: Quinolinate synthase (353 aa).

Positions 47 and 68 each coordinate iminosuccinate. Cys-113 is a binding site for [4Fe-4S] cluster. Iminosuccinate-binding positions include 139–141 (YAN) and Ser-156. Cys-200 provides a ligand contact to [4Fe-4S] cluster. Iminosuccinate contacts are provided by residues 226–228 (HPE) and Thr-243. [4Fe-4S] cluster is bound at residue Cys-297.

This sequence belongs to the quinolinate synthase family. Type 1 subfamily. The cofactor is [4Fe-4S] cluster.

The protein localises to the cytoplasm. It carries out the reaction iminosuccinate + dihydroxyacetone phosphate = quinolinate + phosphate + 2 H2O + H(+). It participates in cofactor biosynthesis; NAD(+) biosynthesis; quinolinate from iminoaspartate: step 1/1. Functionally, catalyzes the condensation of iminoaspartate with dihydroxyacetone phosphate to form quinolinate. This Yersinia pestis bv. Antiqua (strain Antiqua) protein is Quinolinate synthase.